Consider the following 371-residue polypeptide: Cytochrome b (371 aa).

4 helical membrane passes run 25-45 (FGSMLLTCLALQVLTGFFLAV), 69-90 (WMMQNLHAIGASMFFICIYIHI), 105-125 (WMSGITLLITLMATAFFGYVL), and 170-190 (FFALHFILPFAIISLSSLHII). 2 residues coordinate heme b: His-75 and His-89. 2 residues coordinate heme b: His-174 and His-188. His-193 lines the a ubiquinone pocket. The next 4 membrane-spanning stretches (helical) occupy residues 218–238 (YKDLLLLTLMILFLFIIVSFF), 280–300 (LGGALALVMSIMILFTIPFMH), 312–332 (LSQLMFWTLVSTFITITWAAT), and 339–358 (YIMISQMTATLYFTFFLSIP).

This sequence belongs to the cytochrome b family. As to quaternary structure, the cytochrome bc1 complex contains 3 respiratory subunits (MT-CYB, CYC1 and UQCRFS1), 2 core proteins (UQCRC1 and UQCRC2) and probably 6 low-molecular weight proteins. Heme b is required as a cofactor.

Its subcellular location is the mitochondrion inner membrane. Component of the ubiquinol-cytochrome c reductase complex (complex III or cytochrome b-c1 complex) that is part of the mitochondrial respiratory chain. The b-c1 complex mediates electron transfer from ubiquinol to cytochrome c. Contributes to the generation of a proton gradient across the mitochondrial membrane that is then used for ATP synthesis. This chain is Cytochrome b (MT-CYB), found in Simalia amethistina (Amethystine python).